A 301-amino-acid polypeptide reads, in one-letter code: Bifunctional dTDP-4-dehydrorhamnose 3,5-epimerase/dTDP-4-dehydrorhamnose reductase (301 aa).

NADPH is bound by residues W23 to I24, G69 to T71, and Y111.

The protein belongs to the dTDP-4-dehydrorhamnose reductase family. In terms of tissue distribution, expressed in roots, leaves, stems and flowers.

The catalysed reaction is dTDP-4-dehydro-6-deoxy-alpha-D-glucose = dTDP-4-dehydro-beta-L-rhamnose. It carries out the reaction dTDP-beta-L-rhamnose + NADP(+) = dTDP-4-dehydro-beta-L-rhamnose + NADPH + H(+). The protein operates within carbohydrate biosynthesis; dTDP-L-rhamnose biosynthesis. Bifunctional enzyme involved in dTDP-beta-L-rhamnose biosynthesis. Catalyzes the epimerization of the C3' and C5'positions of dTDP-6-deoxy-4-keto-alpha-D-glucose to form dTDP-4-keto-beta-L-rhamnose and its reduction to yield dTDP-beta-L-rhamnose. Can form UDP-beta-L-rhamnose from UDP-6-deoxy-4-keto-alpha-D-glucose, but cannot convert GDP-4-dehydro-6-deoxy-D-mannose to GDP-fucose. The chain is Bifunctional dTDP-4-dehydrorhamnose 3,5-epimerase/dTDP-4-dehydrorhamnose reductase from Arabidopsis thaliana (Mouse-ear cress).